Consider the following 373-residue polypeptide: RNA 3'-terminal phosphate cyclase-like protein (373 aa).

It belongs to the RNA 3'-terminal cyclase family. Type 2 subfamily. Part of the small subunit (SSU) processome, composed of more than 70 proteins and the RNA chaperone small nucleolar RNA (snoRNA) U3. Interacts with BMS1.

It is found in the nucleus. The protein resides in the nucleolus. Its function is as follows. As part of the small subunit (SSU) processome, it plays a role in 40S-ribosomal-subunit biogenesis in the early pre-rRNA processing steps at sites A0, A1 and A2 that are required for proper maturation of the 18S RNA. Activates BMS1 by promoting GDP/GTP exchange. Does not have cyclase activity. The polypeptide is RNA 3'-terminal phosphate cyclase-like protein (Rcl1) (Mus musculus (Mouse)).